The chain runs to 438 residues: Trigger factor (438 aa).

Residues 160 to 231 (SDQVTIEEQG…IMDVKTKQLQ (72 aa)) enclose the PPIase FKBP-type domain. A disordered region spans residues 407-438 (AQLSGPQAETVAADQGEQQAEGQEESAEKSEE). Positions 418–427 (AADQGEQQAE) are enriched in low complexity.

It belongs to the FKBP-type PPIase family. Tig subfamily.

The protein localises to the cytoplasm. It catalyses the reaction [protein]-peptidylproline (omega=180) = [protein]-peptidylproline (omega=0). Functionally, involved in protein export. Acts as a chaperone by maintaining the newly synthesized protein in an open conformation. Functions as a peptidyl-prolyl cis-trans isomerase. The protein is Trigger factor of Deinococcus deserti (strain DSM 17065 / CIP 109153 / LMG 22923 / VCD115).